The primary structure comprises 100 residues: MAEMKTDAATLAQEAGNFERISGDLKTQIDQVESTAGSLQGQWRGAAGTAAQAAVVRFQEAANKQKQELDEISTNIRQAGVQYSRADEEQQQALSSQMGF.

Positions 49 to 86 (TAAQAAVVRFQEAANKQKQELDEISTNIRQAGVQYSRA) form a coiled coil. The disordered stretch occupies residues 81 to 100 (VQYSRADEEQQQALSSQMGF). The segment covering 91–100 (QQALSSQMGF) has biased composition (polar residues).

This sequence belongs to the WXG100 family. CFP-10 subfamily. In terms of assembly, forms a tight 1:1 complex with EsxA (ESAT-6).

Its subcellular location is the secreted. In terms of biological role, a secreted protein. Acts as a strong host T-cell antigen. Involved in translocation of bacteria from the host (human) phagolysosome to the host cytoplasm. Might serve as a chaperone to prevent uncontrolled membrane lysis by its partner EsxA. In Mycobacterium bovis (strain ATCC BAA-935 / AF2122/97), this protein is ESAT-6-like protein EsxB (esxB).